Consider the following 299-residue polypeptide: tRNA dimethylallyltransferase 2 (299 aa).

Residue 9 to 16 (GPTGVGKT) participates in ATP binding. Position 11 to 16 (11 to 16 (TGVGKT)) interacts with substrate. Residues 34 to 37 (DSRQ) are interaction with substrate tRNA.

Belongs to the IPP transferase family. Monomer. It depends on Mg(2+) as a cofactor.

It carries out the reaction adenosine(37) in tRNA + dimethylallyl diphosphate = N(6)-dimethylallyladenosine(37) in tRNA + diphosphate. In terms of biological role, catalyzes the transfer of a dimethylallyl group onto the adenine at position 37 in tRNAs that read codons beginning with uridine, leading to the formation of N6-(dimethylallyl)adenosine (i(6)A). The chain is tRNA dimethylallyltransferase 2 from Parabacteroides distasonis (strain ATCC 8503 / DSM 20701 / CIP 104284 / JCM 5825 / NCTC 11152).